We begin with the raw amino-acid sequence, 221 residues long: Histone H1.3 (221 aa).

Over residues Met1–Lys17 the composition is skewed to low complexity. Positions Met1–Ser42 are disordered. An N-acetylserine modification is found at Ser2. Ser2 bears the Phosphoserine mark. Lys17 is subject to N6-acetyllysine. Thr18 is modified (phosphothreonine). The span at Val20–Ala36 shows a compositional bias: basic residues. 3 positions are modified to N6-(beta-hydroxybutyryl)lysine: Lys33, Lys35, and Lys53. In terms of domain architecture, H15 spans Ser37–Lys110. Position 55 is a citrulline (Arg55). Lys65, Lys86, and Lys91 each carry N6-(beta-hydroxybutyryl)lysine. The interval Gly92–Lys221 is disordered. Ser105 bears the Phosphoserine; by PKC mark. Lys107 and Lys141 each carry N6-(beta-hydroxybutyryl)lysine. 4 stretches are compositionally biased toward basic residues: residues Lys120 to Lys141, Lys150 to Lys161, Lys170 to Ala187, and Lys194 to Lys221.

Belongs to the histone H1/H5 family. In terms of processing, H1 histones are progressively phosphorylated during the cell cycle, becoming maximally phosphorylated during late G2 phase and M phase, and being dephosphorylated sharply thereafter. Post-translationally, hydroxybutyrylation of histones is induced by starvation. Citrullination at Arg-55 (H1R54ci) by PADI4 takes place within the DNA-binding site of H1 and results in its displacement from chromatin and global chromatin decondensation, thereby promoting pluripotency and stem cell maintenance.

Its subcellular location is the nucleus. It is found in the chromosome. In terms of biological role, histone H1 protein binds to linker DNA between nucleosomes forming the macromolecular structure known as the chromatin fiber. Histones H1 are necessary for the condensation of nucleosome chains into higher-order structured fibers. Also acts as a regulator of individual gene transcription through chromatin remodeling, nucleosome spacing and DNA methylation. This Mus musculus (Mouse) protein is Histone H1.3.